Consider the following 288-residue polypeptide: UTP--glucose-1-phosphate uridylyltransferase (288 aa).

It belongs to the UDPGP type 2 family.

It carries out the reaction alpha-D-glucose 1-phosphate + UTP + H(+) = UDP-alpha-D-glucose + diphosphate. Its pathway is glycolipid metabolism; diglucosyl-diacylglycerol biosynthesis. In terms of biological role, catalyzes the formation of UDP-glucose from glucose-1-phosphate and UTP. This is an intermediate step in the biosynthesis of diglucosyl-diacylglycerol (Glc2-DAG), i.e. the predominant glycolipid found in the S.aureus membrane, which is also used as a membrane anchor for lipoteichoic acid (LTA). The protein is UTP--glucose-1-phosphate uridylyltransferase (gtaB) of Staphylococcus aureus (strain bovine RF122 / ET3-1).